Here is an 83-residue protein sequence, read N- to C-terminus: Beta-toxin Ct7 (83 aa).

The signal sequence occupies residues 1–18; it reads MKVLILIIASVLLIGVEC. Residues 19-81 form the LCN-type CS-alpha/beta domain; the sequence is KDGYPMNSEG…VWDSATNKCG (63 aa). 4 disulfides stabilise this stretch: cysteine 29-cysteine 80, cysteine 33-cysteine 54, cysteine 40-cysteine 61, and cysteine 44-cysteine 63. Glycine 81 carries the post-translational modification Glycine amide. Glycine 82 is a propeptide.

The protein belongs to the long (4 C-C) scorpion toxin superfamily. Sodium channel inhibitor family. Beta subfamily. In terms of tissue distribution, expressed by the venom gland.

It is found in the secreted. In terms of biological role, beta toxins bind voltage-independently at site-4 of sodium channels (Nav) and shift the voltage of activation toward more negative potentials thereby affecting sodium channel activation and promoting spontaneous and repetitive firing. Is possibly toxic to mice, freshwater shrimp and crickets. In Centruroides tecomanus (Scorpion), this protein is Beta-toxin Ct7.